The primary structure comprises 439 residues: MSVPSSLMKQPPIQSTAGAVPVRNEKGEISMEKVKVKRYVSGKRPDYAPMESSDEEDEEFQFIKKAKEQEAEPEEQEEDSSSDPRLRRLQNRISEDVEERLARHRKIVEPEVVGESDSEVEGDPWRMEREDSSEEEEEEIDEEEIERRRGMMRQRAQERKNEELEVMEVEDEGRSGEESESESEYEEYTDSEDEMEPRLKPVFIRKKDRVTVQEREAEALKQKELEQEAKHMAEERRKYTLKIVEEETKKELEENKRSLAALDALNTDDENDEEEYEAWKVRELKRIKRDREDREALEKEKAEIERMRNLTEEERRAELRANGKVITNKAVKGKYKFLQKYYHRGAFFMDEDEEVYKRDFSAPTLEDHFNKTILPKVMQVKNFGRSGRTKYTHLVDQDTTSFDSAWGQESAQNTKFFKQKAAGVRDVFERPSAKKRKTT.

Residues 1 to 17 (MSVPSSLMKQPPIQSTA) are compositionally biased toward polar residues. Positions 1–200 (MSVPSSLMKQ…SEDEMEPRLK (200 aa)) are disordered. S2 is subject to N-acetylserine. Basic and acidic residues predominate over residues 23 to 34 (RNEKGEISMEKV). A phosphoserine mark is found at S52 and S53. Over residues 61 to 70 (QFIKKAKEQE) the composition is skewed to basic and acidic residues. K67 participates in a covalent cross-link: Glycyl lysine isopeptide (Lys-Gly) (interchain with G-Cter in SUMO2). Over residues 71–81 (AEPEEQEEDSS) the composition is skewed to acidic residues. S94, S116, S118, S132, and S133 each carry phosphoserine. Acidic residues-rich tracts occupy residues 112-122 (VVGESDSEVEG) and 131-144 (DSSE…DEEE). Residues 145-163 (IERRRGMMRQRAQERKNEE) show a composition bias toward basic and acidic residues. Residues 178-195 (ESESESEYEEYTDSEDEM) are compositionally biased toward acidic residues. A Glycyl lysine isopeptide (Lys-Gly) (interchain with G-Cter in SUMO2) cross-link involves residue K249. T267 bears the Phosphothreonine mark. K357 is covalently cross-linked (Glycyl lysine isopeptide (Lys-Gly) (interchain with G-Cter in SUMO2)). The residue at position 361 (S361) is a Phosphoserine. Residues K371, K381, K415, and K418 each participate in a glycyl lysine isopeptide (Lys-Gly) (interchain with G-Cter in SUMO2) cross-link. The residue at position 432 (S432) is a Phosphoserine.

This sequence belongs to the MFAP1 family. Component of the spliceosome B complex. Interacts with PRPF38A (via N-terminal interaction domain).

The protein localises to the nucleus. Involved in pre-mRNA splicing as a component of the spliceosome. This chain is Microfibrillar-associated protein 1, found in Bos taurus (Bovine).